The following is a 373-amino-acid chain: Anhydro-N-acetylmuramic acid kinase (373 aa).

13–20 (GTSMDGID) serves as a coordination point for ATP.

The protein belongs to the anhydro-N-acetylmuramic acid kinase family.

The catalysed reaction is 1,6-anhydro-N-acetyl-beta-muramate + ATP + H2O = N-acetyl-D-muramate 6-phosphate + ADP + H(+). Its pathway is amino-sugar metabolism; 1,6-anhydro-N-acetylmuramate degradation. It functions in the pathway cell wall biogenesis; peptidoglycan recycling. Catalyzes the specific phosphorylation of 1,6-anhydro-N-acetylmuramic acid (anhMurNAc) with the simultaneous cleavage of the 1,6-anhydro ring, generating MurNAc-6-P. Is required for the utilization of anhMurNAc either imported from the medium or derived from its own cell wall murein, and thus plays a role in cell wall recycling. The chain is Anhydro-N-acetylmuramic acid kinase from Brucella abortus (strain 2308).